We begin with the raw amino-acid sequence, 678 residues long: NADPH--cytochrome P450 reductase (678 aa).

Gly-2 carries the post-translational modification N-acetylglycine. At Gly-2–Ser-21 the chain is on the lumenal side. The helical transmembrane segment at Leu-22 to Phe-42 threads the bilayer. Residues Leu-43 to Ser-678 lie on the Cytoplasmic side of the membrane. Ser-63 is subject to Phosphoserine. Residues Ile-80 to Trp-224 form the Flavodoxin-like domain. Residues Ser-86–Ala-91, Ala-138–Gly-141, Leu-173–Asn-182, and Asp-208 contribute to the FMN site. One can recognise an FAD-binding FR-type domain in the interval Lys-279–Pro-521. NADP(+) is bound at residue Arg-298. Residues Arg-424, Arg-454–Ser-457, Cys-472–Val-474, Tyr-478, and Gly-488–Thr-491 contribute to the FAD site. NADP(+) is bound by residues Thr-535, Ser-596 to Arg-597, Lys-602 to Gln-606, and Asp-639. Residue Trp-677 coordinates FAD.

This sequence belongs to the NADPH--cytochrome P450 reductase family. It in the N-terminal section; belongs to the flavodoxin family. The protein in the C-terminal section; belongs to the flavoprotein pyridine nucleotide cytochrome reductase family. Requires FAD as cofactor. It depends on FMN as a cofactor.

It is found in the endoplasmic reticulum membrane. It carries out the reaction 2 oxidized [cytochrome P450] + NADPH = 2 reduced [cytochrome P450] + NADP(+) + H(+). In terms of biological role, this enzyme is required for electron transfer from NADP to cytochrome P450 in microsomes. It can also provide electron transfer to heme oxygenase and cytochrome B5. The sequence is that of NADPH--cytochrome P450 reductase from Cavia porcellus (Guinea pig).